The following is a 391-amino-acid chain: NADH-quinone oxidoreductase subunit D (391 aa).

Belongs to the complex I 49 kDa subunit family. As to quaternary structure, NDH-1 is composed of 14 different subunits. Subunits NuoB, C, D, E, F, and G constitute the peripheral sector of the complex.

The protein localises to the cell inner membrane. The catalysed reaction is a quinone + NADH + 5 H(+)(in) = a quinol + NAD(+) + 4 H(+)(out). Its function is as follows. NDH-1 shuttles electrons from NADH, via FMN and iron-sulfur (Fe-S) centers, to quinones in the respiratory chain. The immediate electron acceptor for the enzyme in this species is believed to be ubiquinone. Couples the redox reaction to proton translocation (for every two electrons transferred, four hydrogen ions are translocated across the cytoplasmic membrane), and thus conserves the redox energy in a proton gradient. The polypeptide is NADH-quinone oxidoreductase subunit D (Rickettsia akari (strain Hartford)).